The following is a 203-amino-acid chain: Holliday junction branch migration complex subunit RuvA (203 aa).

The domain I stretch occupies residues 1–63 (MIAFVSGPVA…EDSLTLYGFV (63 aa)). Positions 64 to 141 (DDDERQVFEL…GEPLGTGGPA (78 aa)) are domain II. Residues 141 to 145 (AIGRA) form a flexible linker region. Residues 146-203 (VTTGWREQLHAALIGLGYATREADEAVAAVAPQAEAAGGTPQVGQLLKAALQTLNRTR) are domain III.

The protein belongs to the RuvA family. As to quaternary structure, homotetramer. Forms an RuvA(8)-RuvB(12)-Holliday junction (HJ) complex. HJ DNA is sandwiched between 2 RuvA tetramers; dsDNA enters through RuvA and exits via RuvB. An RuvB hexamer assembles on each DNA strand where it exits the tetramer. Each RuvB hexamer is contacted by two RuvA subunits (via domain III) on 2 adjacent RuvB subunits; this complex drives branch migration. In the full resolvosome a probable DNA-RuvA(4)-RuvB(12)-RuvC(2) complex forms which resolves the HJ.

Its subcellular location is the cytoplasm. The RuvA-RuvB-RuvC complex processes Holliday junction (HJ) DNA during genetic recombination and DNA repair, while the RuvA-RuvB complex plays an important role in the rescue of blocked DNA replication forks via replication fork reversal (RFR). RuvA specifically binds to HJ cruciform DNA, conferring on it an open structure. The RuvB hexamer acts as an ATP-dependent pump, pulling dsDNA into and through the RuvAB complex. HJ branch migration allows RuvC to scan DNA until it finds its consensus sequence, where it cleaves and resolves the cruciform DNA. The chain is Holliday junction branch migration complex subunit RuvA from Streptomyces avermitilis (strain ATCC 31267 / DSM 46492 / JCM 5070 / NBRC 14893 / NCIMB 12804 / NRRL 8165 / MA-4680).